We begin with the raw amino-acid sequence, 78 residues long: Large ribosomal subunit protein bL28 (78 aa).

Positions 1-21 (MSRVCQVTGKRPVSGNNRSHA) are disordered.

It belongs to the bacterial ribosomal protein bL28 family.

The polypeptide is Large ribosomal subunit protein bL28 (Serratia proteamaculans (strain 568)).